The sequence spans 360 residues: D-alanine--D-alanine ligase (360 aa).

In terms of domain architecture, ATP-grasp spans 149–353; sequence KKLMAAEGLP…YEELLDVLVQ (205 aa). Residue 176–231 coordinates ATP; sequence KNLLGLPVFVKPARGGSSIGISRVTAWEDFNKAVGLARAHDEKVIVESEIVGSEVE. Positions 308, 320, and 322 each coordinate Mg(2+).

The protein belongs to the D-alanine--D-alanine ligase family. Mg(2+) serves as cofactor. The cofactor is Mn(2+).

The protein localises to the cytoplasm. The catalysed reaction is 2 D-alanine + ATP = D-alanyl-D-alanine + ADP + phosphate + H(+). It functions in the pathway cell wall biogenesis; peptidoglycan biosynthesis. Its function is as follows. Cell wall formation. The polypeptide is D-alanine--D-alanine ligase (Corynebacterium glutamicum (strain ATCC 13032 / DSM 20300 / JCM 1318 / BCRC 11384 / CCUG 27702 / LMG 3730 / NBRC 12168 / NCIMB 10025 / NRRL B-2784 / 534)).